Reading from the N-terminus, the 309-residue chain is Tyrosine recombinase XerD (309 aa).

In terms of domain architecture, Core-binding (CB) spans 3–88; sequence MRASLAIENF…ALRQFFRFLY (86 aa). Residues 109-302 enclose the Tyr recombinase domain; it reads PLPKIMSVEN…LEERLHKLVS (194 aa). Active-site residues include Arg158, Lys182, His254, Arg257, and His280. Tyr289 (O-(3'-phospho-DNA)-tyrosine intermediate) is an active-site residue.

This sequence belongs to the 'phage' integrase family. XerD subfamily. Forms a cyclic heterotetrameric complex composed of two molecules of XerC and two molecules of XerD.

Its subcellular location is the cytoplasm. Its function is as follows. Site-specific tyrosine recombinase, which acts by catalyzing the cutting and rejoining of the recombining DNA molecules. The XerC-XerD complex is essential to convert dimers of the bacterial chromosome into monomers to permit their segregation at cell division. It also contributes to the segregational stability of plasmids. The chain is Tyrosine recombinase XerD from Brucella melitensis biotype 1 (strain ATCC 23456 / CCUG 17765 / NCTC 10094 / 16M).